Here is a 268-residue protein sequence, read N- to C-terminus: uncharacterized protein (268 aa).

Positions 132 to 159 (DELDEKIIEFDTKMNEILEELLEDVEVE) form a coiled coil.

This is an uncharacterized protein from Methanocaldococcus jannaschii (strain ATCC 43067 / DSM 2661 / JAL-1 / JCM 10045 / NBRC 100440) (Methanococcus jannaschii).